A 224-amino-acid polypeptide reads, in one-letter code: Thiamine-triphosphatase (224 aa).

Ala-2 is subject to N-acetylalanine. A CYTH domain is found at Leu-5–Phe-201. Mg(2+) contacts are provided by Glu-7 and Glu-9. Substrate-binding residues include Lys-11, Arg-55, Arg-57, Lys-65, and Arg-125. 3 residues coordinate Mg(2+): Asp-145, Glu-157, and Glu-159. Substrate is bound at residue Glu-157. Lys-193 contributes to the substrate binding site.

Belongs to the ThTPase family. Monomer. Mg(2+) serves as cofactor.

It is found in the cytoplasm. The catalysed reaction is thiamine triphosphate + H2O = thiamine diphosphate + phosphate + H(+). Hydrolase highly specific for thiamine triphosphate (ThTP). The protein is Thiamine-triphosphatase (Thtpa) of Mus musculus (Mouse).